A 56-amino-acid polypeptide reads, in one-letter code: Large ribosomal subunit protein bL32 (56 aa).

Positions 1–16 (MAVQKNRKTRSKRGMR) are enriched in basic residues. The disordered stretch occupies residues 1–37 (MAVQKNRKTRSKRGMRRSHDALGTATMSVDSTSGETH). Residues 25–35 (ATMSVDSTSGE) are compositionally biased toward polar residues.

This sequence belongs to the bacterial ribosomal protein bL32 family.

In Pseudoalteromonas atlantica (strain T6c / ATCC BAA-1087), this protein is Large ribosomal subunit protein bL32.